Consider the following 383-residue polypeptide: Chaperone protein DnaJ (383 aa).

The J domain occupies aspartate 5–glycine 70. A CR-type zinc finger spans residues glycine 140–glutamate 219. Cysteine 153, cysteine 156, cysteine 171, cysteine 174, cysteine 193, cysteine 196, cysteine 207, and cysteine 210 together coordinate Zn(2+). CXXCXGXG motif repeat units follow at residues cysteine 153–glycine 160, cysteine 171–glycine 178, cysteine 193–glycine 200, and cysteine 207–glycine 214.

The protein belongs to the DnaJ family. Homodimer. Zn(2+) is required as a cofactor.

The protein localises to the cytoplasm. Its function is as follows. Participates actively in the response to hyperosmotic and heat shock by preventing the aggregation of stress-denatured proteins and by disaggregating proteins, also in an autonomous, DnaK-independent fashion. Unfolded proteins bind initially to DnaJ; upon interaction with the DnaJ-bound protein, DnaK hydrolyzes its bound ATP, resulting in the formation of a stable complex. GrpE releases ADP from DnaK; ATP binding to DnaK triggers the release of the substrate protein, thus completing the reaction cycle. Several rounds of ATP-dependent interactions between DnaJ, DnaK and GrpE are required for fully efficient folding. Also involved, together with DnaK and GrpE, in the DNA replication of plasmids through activation of initiation proteins. The chain is Chaperone protein DnaJ from Acidiphilium cryptum (strain JF-5).